We begin with the raw amino-acid sequence, 712 residues long: Autophagy-related protein 13 (712 aa).

Disordered stretches follow at residues 388 to 443 (AGST…ETPP) and 568 to 611 (GSVG…DDDE). Low complexity predominate over residues 402–415 (SSVGSGSKYSSSFG). The interval 412–420 (SSFGRIRRH) is ATG17-binding. Basic and acidic residues predominate over residues 424–439 (RRSESIDRTAKPRKSN). The segment at 441-500 (TPPEDLLEFVKLLEDKKELNMKPSTILPQQDISSSLIKFQSMKPNNDTLSDNLSMSMSID) is ATG1-binding. Residues 576 to 585 (TNEDSKEDED) show a composition bias toward acidic residues.

The protein belongs to the ATG13 family. Fungi subfamily. As to quaternary structure, hypophosphorylated form interacts with ATG1 to form the ATG1-ATG13 kinase complex. The ATG1-ATG13 complex interacts with the ATG17-ATG29-ATG31 complex through direct interaction with ATG17. Interacts with VAC8. Hyperphosphorylated under nutrient-rich conditions. Starvation and TOR inactivation results in ATG13 partial dephosphorylation leading to ATG1-binding. Dephosphorylation induces ATG17-binding.

Its subcellular location is the cytoplasm. The protein localises to the preautophagosomal structure. In terms of biological role, activates the ATG1 kinase in a nutritional condition dependent manner through the TOR pathway, leading to autophagy. Involved in ATG9 and ATG23 cycling through the pre-autophagosomal structure. Also involved in cytoplasm to vacuole transport (Cvt) and more specifically in Cvt vesicle formation. Seems to play a role in the switching machinery regulating the conversion between the Cvt pathway and autophagy. Finally, ATG13 is also required for glycogen storage during stationary phase. In Kluyveromyces marxianus (strain DMKU3-1042 / BCC 29191 / NBRC 104275) (Yeast), this protein is Autophagy-related protein 13.